Reading from the N-terminus, the 377-residue chain is N-acetyldiaminopimelate deacetylase (377 aa).

The active site involves Asp70. Catalysis depends on Glu129, which acts as the Proton acceptor.

The protein belongs to the peptidase M20A family. N-acetyldiaminopimelate deacetylase subfamily.

The catalysed reaction is N-acetyl-(2S,6S)-2,6-diaminopimelate + H2O = (2S,6S)-2,6-diaminopimelate + acetate. It functions in the pathway amino-acid biosynthesis; L-lysine biosynthesis via DAP pathway; LL-2,6-diaminopimelate from (S)-tetrahydrodipicolinate (acetylase route): step 3/3. Functionally, catalyzes the conversion of N-acetyl-diaminopimelate to diaminopimelate and acetate. The polypeptide is N-acetyldiaminopimelate deacetylase (Geobacillus thermodenitrificans (strain NG80-2)).